A 200-amino-acid chain; its full sequence is Small ribosomal subunit protein uS4 (200 aa).

The 64-residue stretch at 92–155 (SRLDAVVYQL…QKLNIIAESV (64 aa)) folds into the S4 RNA-binding domain.

It belongs to the universal ribosomal protein uS4 family. In terms of assembly, part of the 30S ribosomal subunit. Contacts protein S5. The interaction surface between S4 and S5 is involved in control of translational fidelity.

One of the primary rRNA binding proteins, it binds directly to 16S rRNA where it nucleates assembly of the body of the 30S subunit. Functionally, with S5 and S12 plays an important role in translational accuracy. This is Small ribosomal subunit protein uS4 from Macrococcus caseolyticus (strain JCSC5402) (Macrococcoides caseolyticum).